Here is a 436-residue protein sequence, read N- to C-terminus: Serine--tRNA ligase (436 aa).

The segment covering 43 to 55 (TKSEQLKQKRNEV) has biased composition (basic and acidic residues). Residues 43 to 68 (TKSEQLKQKRNEVSDQIAQAKRNKED) form a disordered region. 237 to 239 (TAE) lines the L-serine pocket. 268–270 (RSE) is a binding site for ATP. E291 serves as a coordination point for L-serine. 355-358 (EISS) serves as a coordination point for ATP. Residue S390 coordinates L-serine.

The protein belongs to the class-II aminoacyl-tRNA synthetase family. Type-1 seryl-tRNA synthetase subfamily. In terms of assembly, homodimer. The tRNA molecule binds across the dimer.

It is found in the cytoplasm. The enzyme catalyses tRNA(Ser) + L-serine + ATP = L-seryl-tRNA(Ser) + AMP + diphosphate + H(+). It catalyses the reaction tRNA(Sec) + L-serine + ATP = L-seryl-tRNA(Sec) + AMP + diphosphate + H(+). The protein operates within aminoacyl-tRNA biosynthesis; selenocysteinyl-tRNA(Sec) biosynthesis; L-seryl-tRNA(Sec) from L-serine and tRNA(Sec): step 1/1. Its function is as follows. Catalyzes the attachment of serine to tRNA(Ser). Is also able to aminoacylate tRNA(Sec) with serine, to form the misacylated tRNA L-seryl-tRNA(Sec), which will be further converted into selenocysteinyl-tRNA(Sec). The sequence is that of Serine--tRNA ligase from Lactobacillus johnsonii (strain CNCM I-12250 / La1 / NCC 533).